Consider the following 400-residue polypeptide: Argininosuccinate synthase (400 aa).

Position 9-17 (Ala-9–Ser-17) interacts with ATP. Tyr-87 contacts L-citrulline. ATP is bound at residue Gly-117. L-aspartate-binding residues include Thr-119, Asn-123, and Asp-124. Asn-123 contributes to the L-citrulline binding site. Arg-127, Ser-176, Ser-185, Glu-261, and Tyr-273 together coordinate L-citrulline.

This sequence belongs to the argininosuccinate synthase family. Type 1 subfamily. Homotetramer.

The protein localises to the cytoplasm. The enzyme catalyses L-citrulline + L-aspartate + ATP = 2-(N(omega)-L-arginino)succinate + AMP + diphosphate + H(+). It functions in the pathway amino-acid biosynthesis; L-arginine biosynthesis; L-arginine from L-ornithine and carbamoyl phosphate: step 2/3. The chain is Argininosuccinate synthase from Pelodictyon phaeoclathratiforme (strain DSM 5477 / BU-1).